Consider the following 297-residue polypeptide: ATP synthase F(1) complex subunit gamma, mitochondrial (297 aa).

Residues 1–25 (MFSRAGVAGLSAWTLQPQWIQVRNM) constitute a mitochondrion transit peptide. K39 bears the N6-acetyllysine mark. K49 is modified (N6-succinyllysine). An N6-acetyllysine modification is found at K55. An N6-acetyllysine; alternate modification is found at K115. K115 is modified (N6-succinyllysine; alternate). S146 carries the post-translational modification Phosphoserine. K154 is subject to N6-acetyllysine; alternate. The residue at position 154 (K154) is an N6-succinyllysine; alternate. Position 197 is an N6-acetyllysine (K197). The residue at position 270 (K270) is an N6-succinyllysine.

It belongs to the ATPase gamma chain family. Component of the ATP synthase complex composed at least of ATP5F1A/subunit alpha, ATP5F1B/subunit beta, ATP5MC1/subunit c (homooctomer), MT-ATP6/subunit a, MT-ATP8/subunit 8, ATP5ME/subunit e, ATP5MF/subunit f, ATP5MG/subunit g, ATP5MK/subunit k, ATP5MJ/subunit j, ATP5F1C/subunit gamma, ATP5F1D/subunit delta, ATP5F1E/subunit epsilon, ATP5PF/subunit F6, ATP5PB/subunit b, ATP5PD/subunit d, ATP5PO/subunit OSCP. ATP synthase complex consists of a soluble F(1) head domain (subunits alpha(3) and beta(3)) - the catalytic core - and a membrane F(0) domain - the membrane proton channel (subunits c, a, 8, e, f, g, k and j). These two domains are linked by a central stalk (subunits gamma, delta, and epsilon) rotating inside the F1 region and a stationary peripheral stalk (subunits F6, b, d, and OSCP). Interacts with FLVCR2; this interaction occurs in the absence of heme and is disrupted upon heme binding.

Its subcellular location is the mitochondrion inner membrane. Its function is as follows. Subunit gamma, of the mitochondrial membrane ATP synthase complex (F(1)F(0) ATP synthase or Complex V) that produces ATP from ADP in the presence of a proton gradient across the membrane which is generated by electron transport complexes of the respiratory chain. ATP synthase complex consist of a soluble F(1) head domain - the catalytic core - and a membrane F(1) domain - the membrane proton channel. These two domains are linked by a central stalk rotating inside the F(1) region and a stationary peripheral stalk. During catalysis, ATP synthesis in the catalytic domain of F(1) is coupled via a rotary mechanism of the central stalk subunits to proton translocation. In vivo, can only synthesize ATP although its ATP hydrolase activity can be activated artificially in vitro. With the central stalk subunit delta, is essential for the biogenesis of F(1) catalytic part of the ATP synthase complex namely in the formation of F1 assembly intermediate. In Pongo abelii (Sumatran orangutan), this protein is ATP synthase F(1) complex subunit gamma, mitochondrial.